The sequence spans 112 residues: Protein FAM32A (112 aa).

Positions 23 to 56 (TKRKKKKKDKDKAKMLEAMGTSKKSEEEKRRCLD) are disordered. Basic and acidic residues predominate over residues 45 to 56 (KKSEEEKRRCLD).

It belongs to the FAM32 family. In terms of tissue distribution, widely expressed, with highest level in pancreas and lowest in muscle.

Its subcellular location is the nucleus. May induce G2 arrest and apoptosis. May also increase cell sensitivity to apoptotic stimuli. In cell lines, may play a role in the inhibition of anchor-independent cell growth. The sequence is that of Protein FAM32A (Fam32a) from Mus musculus (Mouse).